The following is a 286-amino-acid chain: ATP synthase gamma chain (286 aa).

The protein belongs to the ATPase gamma chain family. As to quaternary structure, F-type ATPases have 2 components, CF(1) - the catalytic core - and CF(0) - the membrane proton channel. CF(1) has five subunits: alpha(3), beta(3), gamma(1), delta(1), epsilon(1). CF(0) has three main subunits: a, b and c.

The protein resides in the cell inner membrane. Functionally, produces ATP from ADP in the presence of a proton gradient across the membrane. The gamma chain is believed to be important in regulating ATPase activity and the flow of protons through the CF(0) complex. This Shewanella halifaxensis (strain HAW-EB4) protein is ATP synthase gamma chain.